The following is an 80-amino-acid chain: Defensin-like protein 276 (80 aa).

Positions 1–24 (MSGQKYQLVSLLLIICLLFSQSTA) are cleaved as a signal peptide. 4 disulfides stabilise this stretch: cysteine 27-cysteine 67, cysteine 33-cysteine 55, cysteine 39-cysteine 65, and cysteine 43-cysteine 66.

The protein belongs to the DEFL family.

The protein resides in the secreted. This is Defensin-like protein 276 from Arabidopsis thaliana (Mouse-ear cress).